A 531-amino-acid polypeptide reads, in one-letter code: Peptide chain release factor 3 (531 aa).

In terms of domain architecture, tr-type G spans 13-282 (AKRRTFAIIS…TLIEHAPPPK (270 aa)). Residues 22–29 (SHPDAGKT), 90–94 (DTPGH), and 144–147 (NKLD) each bind GTP.

It belongs to the TRAFAC class translation factor GTPase superfamily. Classic translation factor GTPase family. PrfC subfamily.

The protein localises to the cytoplasm. Its function is as follows. Increases the formation of ribosomal termination complexes and stimulates activities of RF-1 and RF-2. It binds guanine nucleotides and has strong preference for UGA stop codons. It may interact directly with the ribosome. The stimulation of RF-1 and RF-2 is significantly reduced by GTP and GDP, but not by GMP. The protein is Peptide chain release factor 3 of Psychrobacter sp. (strain PRwf-1).